The chain runs to 589 residues: Serine/threonine-protein phosphatase 2A 65 kDa regulatory subunit A alpha isoform (589 aa).

An N-acetylalanine modification is found at Ala2. 15 HEAT repeats span residues Asp8–Arg46, Thr47–Glu84, Tyr85–Asp123, Leu124–Ala161, Val162–Asn200, Val201–Asp239, Leu240–Ile278, Thr279–Val321, Ile322–Asn360, Thr361–Gln399, Leu400–Phe438, Phe439–Trp477, Ala478–Ile516, Thr517–Thr555, and Leu556–Ala589. The tract at residues Asp8–Gln399 is PP2A subunit B binding. The polyoma small and medium T antigens Binding stretch occupies residues Thr47–Val321. The tract at residues Tyr85 to Asp239 is SV40 small T antigen binding. Lys280 is modified (N6-acetyllysine). The segment at Leu400 to Ala589 is PP2A subunit C binding.

The protein belongs to the phosphatase 2A regulatory subunit A family. In terms of assembly, PP2A consists of a common heterodimeric core enzyme, composed of PPP2CA a 36 kDa catalytic subunit (subunit C) and PPP2R1A a 65 kDa constant regulatory subunit (PR65 or subunit A), that associates with a variety of regulatory subunits. Proteins that associate with the core dimer include three families of regulatory subunits B (the R2/B/PR55/B55, R3/B''/PR72/PR130/PR59 and R5/B'/B56 families), the 48 kDa variable regulatory subunit, viral proteins, and cell signaling molecules. Found in a complex with at least ARL2, PPP2CB, PPP2R1A, PPP2R2A, PPP2R5E and TBCD. Interacts with the PP2A C catalytic subunit PPP2CA. Interacts with the PP2A B subunit PPP2R2A. Interacts with the PP2A B subunit PPP2R5D. Interacts with FOXO1; the interaction dephosphorylates FOXO1 on AKT-mediated phosphorylation sites. Interacts with IPO9. Interacts with TP53 and SGO1. Interacts with PLA2G16; this interaction might decrease PP2A activity. Interacts with CTTNBP2NL. Interacts with GNA12; the interaction promotes protein phosphatase 2A activation causing dephosphorylation of MAPT. Interacts with CIP2A; this interaction stabilizes CIP2A. Interacts with PABIR1/FAM122A. Interacts with ADCY8; antagonizes interaction between ADCY8 and calmodulin. Interacts with CRTC3 (when phosphorylated at 'Ser-391'). Interacts with SPRY2. Part of the core of STRIPAK complexes composed of PP2A catalytic and scaffolding subunits, the striatins (PP2A regulatory subunits), the striatin-associated proteins MOB4, STRIP1 and STRIP2, PDCD10 and members of the STE20 kinases, such as STK24 and STK26. Component of the Integrator-PP2A (INTAC) complex, composed of the Integrator core complex and protein phosphatase 2A subunits PPP2CA and PPP2R1A. (Microbial infection) Interacts with JC virus small t antigen; this interaction inhibits PPP2R1A activity.

The protein resides in the cytoplasm. It localises to the nucleus. Its subcellular location is the chromosome. It is found in the centromere. The protein localises to the lateral cell membrane. The protein resides in the cell projection. It localises to the dendrite. Functionally, the PR65 subunit of protein phosphatase 2A serves as a scaffolding molecule to coordinate the assembly of the catalytic subunit and a variable regulatory B subunit. Upon interaction with GNA12 promotes dephosphorylation of microtubule associated protein TAU/MAPT. Required for proper chromosome segregation and for centromeric localization of SGO1 in mitosis. Together with RACK1 adapter, mediates dephosphorylation of AKT1 at 'Ser-473', preventing AKT1 activation and AKT-mTOR signaling pathway. Dephosphorylation of AKT1 is essential for regulatory T-cells (Treg) homeostasis and stability. Part of the striatin-interacting phosphatase and kinase (STRIPAK) complexes. STRIPAK complexes have critical roles in protein (de)phosphorylation and are regulators of multiple signaling pathways including Hippo, MAPK, nuclear receptor and cytoskeleton remodeling. Different types of STRIPAK complexes are involved in a variety of biological processes such as cell growth, differentiation, apoptosis, metabolism and immune regulation. Key mediator of a quality checkpoint during transcription elongation as part of the Integrator-PP2A (INTAC) complex. The INTAC complex drives premature transcription termination of transcripts that are unfavorably configured for transcriptional elongation: within the INTAC complex, acts as a scaffolding subunit for PPP2CA, which catalyzes dephosphorylation of the C-terminal domain (CTD) of Pol II subunit POLR2A/RPB1 and SUPT5H/SPT5, thereby preventing transcriptional elongation. Regulates the recruitment of the SKA complex to kinetochores. The chain is Serine/threonine-protein phosphatase 2A 65 kDa regulatory subunit A alpha isoform from Homo sapiens (Human).